The chain runs to 520 residues: MALSSRARAFSVEALVGRPSKRKLQDPIQAEQPELREKKGGEEEEERRSSAAGKSEPLEKQPKTEPSTSASSGCGSDSGYGNSSESLEEKDIQMELQGSELWKRFHDIGTEMIITKAGRRMFPSVRVKVKGLDPGKQYHVAIDVVPVDSKRYRYVYHSSQWMVAGNTDHLCIIPRFYVHPDSPCSGETWMRQIISFDRMKLTNNEMDDKGHIILQSMHKYKPRVHVIEQGSSVDLSQIQSLPTEGVKTFSFKETEFTTVTAYQNQQITKLKIERNPFAKGFRDTGRNRGVLDGLLETYPWRPSFTLDFKTFGADTQSGSSGSSPVTSSGGAPSPLNSLLSPLCFSPMFHLPTSSLGMPCPEAYLPNVNLPLCYKICPTNFWQQQPLVLPAPERLASSNSSQSLAPLMMEVPMLSSLGVTNSKSGSSEDSSDQYLQAPNSTNQMLYGLQSPGNIFLPNSITPEALSCSFHPSYDFYRYNFSMPSRLISGSNHLKVNDDSQVSFGEGKCNHVHWYPAINHYL.

A disordered region spans residues 1–91 (MALSSRARAF…NSSESLEEKD (91 aa)). Positions 33-49 (PELREKKGGEEEEERRS) are enriched in basic and acidic residues. Residues 67 to 84 (STSASSGCGSDSGYGNSS) are compositionally biased toward low complexity. Positions 96-283 (LQGSELWKRF…RNPFAKGFRD (188 aa)) form a DNA-binding region, T-box.

Seems to be expressed at a low level.

It is found in the nucleus. Probable transcriptional regulator involved in developmental processes. This is major determinant crucial to palatogenesis. This chain is T-box transcription factor TBX22 (TBX22), found in Homo sapiens (Human).